Consider the following 336-residue polypeptide: DNA-directed RNA polymerase subunit alpha (336 aa).

Residues 1–232 form an alpha N-terminal domain (alpha-NTD) region; that stretch reads MIQKNWQELI…DQLGLFVNFE (232 aa). Residues 248–336 form an alpha C-terminal domain (alpha-CTD) region; sequence FNPALLKKVD…ELAKRYEDQY (89 aa).

This sequence belongs to the RNA polymerase alpha chain family. Homodimer. The RNAP catalytic core consists of 2 alpha, 1 beta, 1 beta' and 1 omega subunit. When a sigma factor is associated with the core the holoenzyme is formed, which can initiate transcription.

It catalyses the reaction RNA(n) + a ribonucleoside 5'-triphosphate = RNA(n+1) + diphosphate. In terms of biological role, DNA-dependent RNA polymerase catalyzes the transcription of DNA into RNA using the four ribonucleoside triphosphates as substrates. The polypeptide is DNA-directed RNA polymerase subunit alpha (Chelativorans sp. (strain BNC1)).